Consider the following 286-residue polypeptide: Shikimate dehydrogenase (NADP(+)) (286 aa).

Residues 20 to 22 (SLS) and threonine 67 each bind shikimate. The Proton acceptor role is filled by lysine 71. 2 residues coordinate shikimate: asparagine 92 and aspartate 107. NADP(+) is bound by residues 132 to 136 (GAGGA) and methionine 228. Shikimate is bound at residue tyrosine 230. An NADP(+)-binding site is contributed by glycine 251.

It belongs to the shikimate dehydrogenase family. In terms of assembly, homodimer.

It carries out the reaction shikimate + NADP(+) = 3-dehydroshikimate + NADPH + H(+). Its pathway is metabolic intermediate biosynthesis; chorismate biosynthesis; chorismate from D-erythrose 4-phosphate and phosphoenolpyruvate: step 4/7. In terms of biological role, involved in the biosynthesis of the chorismate, which leads to the biosynthesis of aromatic amino acids. Catalyzes the reversible NADPH linked reduction of 3-dehydroshikimate (DHSA) to yield shikimate (SA). The sequence is that of Shikimate dehydrogenase (NADP(+)) from Geobacter metallireducens (strain ATCC 53774 / DSM 7210 / GS-15).